Reading from the N-terminus, the 256-residue chain is Thiazole synthase (256 aa).

Catalysis depends on K98, which acts as the Schiff-base intermediate with DXP. 1-deoxy-D-xylulose 5-phosphate is bound by residues G159, 185 to 186 (AG), and 207 to 208 (NT).

The protein belongs to the ThiG family. Homotetramer. Forms heterodimers with either ThiH or ThiS.

It is found in the cytoplasm. It catalyses the reaction [ThiS sulfur-carrier protein]-C-terminal-Gly-aminoethanethioate + 2-iminoacetate + 1-deoxy-D-xylulose 5-phosphate = [ThiS sulfur-carrier protein]-C-terminal Gly-Gly + 2-[(2R,5Z)-2-carboxy-4-methylthiazol-5(2H)-ylidene]ethyl phosphate + 2 H2O + H(+). It functions in the pathway cofactor biosynthesis; thiamine diphosphate biosynthesis. Catalyzes the rearrangement of 1-deoxy-D-xylulose 5-phosphate (DXP) to produce the thiazole phosphate moiety of thiamine. Sulfur is provided by the thiocarboxylate moiety of the carrier protein ThiS. In vitro, sulfur can be provided by H(2)S. The protein is Thiazole synthase of Aliivibrio fischeri (strain ATCC 700601 / ES114) (Vibrio fischeri).